We begin with the raw amino-acid sequence, 433 residues long: GTPase Obg (433 aa).

The Obg domain occupies M1 to L159. One can recognise an OBG-type G domain in the interval A160–Q329. GTP contacts are provided by residues G166–S173, F191–V195, D212–G215, N282–D285, and I310–A312. Mg(2+) contacts are provided by S173 and T193. In terms of domain architecture, OCT spans A355 to D433.

The protein belongs to the TRAFAC class OBG-HflX-like GTPase superfamily. OBG GTPase family. As to quaternary structure, monomer. The cofactor is Mg(2+).

It localises to the cytoplasm. An essential GTPase which binds GTP, GDP and possibly (p)ppGpp with moderate affinity, with high nucleotide exchange rates and a fairly low GTP hydrolysis rate. Plays a role in control of the cell cycle, stress response, ribosome biogenesis and in those bacteria that undergo differentiation, in morphogenesis control. The chain is GTPase Obg from Mycoplasma pneumoniae (strain ATCC 29342 / M129 / Subtype 1) (Mycoplasmoides pneumoniae).